The primary structure comprises 710 residues: Low-temperature-induced 78 kDa protein (710 aa).

Disordered stretches follow at residues 1-198 (MDQT…LDGQ), 225-269 (YQSK…RDLS), and 305-507 (GFGD…STYT). Over residues 14-25 (QHPEEVEHHENG) the composition is skewed to basic and acidic residues. A compositionally biased stretch (basic residues) spans 29 to 41 (MFRKVKARAKKFK). Over residues 49–58 (QSNEHEQDHD) the composition is skewed to basic and acidic residues. Residues 59–73 (LVEEDDDDDELEPEV) show a composition bias toward acidic residues. Residues 138–168 (SDKEEKRDVPIHHPLSELSDREESRETHHES) are compositionally biased toward basic and acidic residues. Residues 169–187 (LNTPVSLLSGTEDVTSTFA) show a composition bias toward polar residues. Tandem repeats lie at residues 303–316 (PVGF…ELEK), 317–331 (DFPT…KTET), 336–350 (NSPS…KTES), 357–370 (PMGF…ELEK), and 398–412 (NFPV…KNES). The interval 303–370 (PVGFGDESGA…GSESGAELEK (68 aa)) is 2 X 14 AA repeats of P-[MV]-G-F-G-[DS]-E-S-G-A-E-L-E-K. Composition is skewed to basic and acidic residues over residues 313–331 (ELEK…KTET), 340–352 (RSHE…ESGN), 367–380 (ELEK…DSGR), 402–418 (RSHE…DKDV), 442–466 (EDKF…KTET), and 475–487 (SHPK…KESR). Residues 317–412 (DFPTRSHDFD…SHELDLKNES (96 aa)) form a 3 X 15 AA repeats of [DN]-[FS]-P-[STV]-R-S-H-[DE]-[FL]-D-[LM]-K-[NT]-E-[ST] region. Tandem repeats lie at residues 510–514 (FASML), 532–536 (VDEKL), and 550–554 (VTTKL). The interval 510-600 (FASMLGYSGE…AFSDMVAEKL (91 aa)) is 5 X 5 AA repeats of [FV]-[ADT]-[EST]-[KM]-L. The disordered stretch occupies residues 537-577 (TPVNEKDQETESAVTTKLPISGGGSGVEEQRGEDKSVSGRD). A compositionally biased stretch (basic and acidic residues) spans 564-577 (EEQRGEDKSVSGRD). Tandem repeats lie at residues 579–583 (VAEKL) and 596–600 (VAEKL). The segment at 601 to 710 (QIGGEEEKKE…STVVPVQKEL (110 aa)) is disordered. Over residues 605–626 (EEEKKETTTKEVEKISTEKAAS) the composition is skewed to basic and acidic residues. At serine 626 the chain carries Phosphoserine. A compositionally biased stretch (gly residues) spans 638–654 (GGGGMVGRIKGWFGGGA). 2 consecutive repeat copies span residues 648–670 (GWFG…EEAP) and 674–696 (GWFG…EESP). The tract at residues 648–696 (GWFGGGATDEVKPESPHSVEEAPKSSGWFGGGATEEVKPKSPHSVEESP) is 2 X 23 AA repeats. Basic and acidic residues-rich tracts occupy residues 656–670 (DEVK…EEAP) and 682–693 (EEVKPKSPHSVE).

The protein belongs to the LTI78/LTI65 family. As to expression, accumulates rapidly in leaves, stems, roots, flower petals, filaments, and sepals during cold-acclimation.

The protein resides in the cytoplasm. In terms of biological role, involved in responses to abiotic stresses. Regulates probably root elongation in cold conditions. The chain is Low-temperature-induced 78 kDa protein from Arabidopsis thaliana (Mouse-ear cress).